The sequence spans 336 residues: MELALSLGDNTKKQFSFMEKNSKINNPSVSSTSTSEKDLGFCMALDVAFGGHRSLSSSSSPSVEDEKKKPAPRAKKSDEFRVSSSVDPPLQLQLHFPNWLPENSKGRQGGRMPLGAATVVEEEEEEEEAVPSMSVSPPDSVTSSFQLDFGIKSYGYERRSNKRDIDDEVERSASRASNEDNDDENGSTRKKLRLSKDQSAFLEDSFKEHSTLNPKQKIALAKQLNLRPRQVEVWFQNRRARTKLKQTEVDCEYLKRCCESLTEENRRLQKEVKELRTLKTSTPFYMQLPATTLTMCPSCERVATSAAQPSTSAAHNLCLSTSSLIPVKPRPAKQVS.

Disordered regions lie at residues 53 to 141 (RSLS…PDSV) and 160 to 194 (SNKR…KLRL). The span at 64–81 (EDEKKKPAPRAKKSDEFR) shows a compositional bias: basic and acidic residues. Residues 120 to 129 (VEEEEEEEEA) show a composition bias toward acidic residues. Residues 130 to 141 (VPSMSVSPPDSV) show a composition bias toward low complexity. A compositionally biased stretch (basic and acidic residues) spans 160–173 (SNKRDIDDEVERSA). The segment at residues 187-246 (STRKKLRLSKDQSAFLEDSFKEHSTLNPKQKIALAKQLNLRPRQVEVWFQNRRARTKLKQ) is a DNA-binding region (homeobox). Positions 254–275 (LKRCCESLTEENRRLQKEVKEL) are leucine-zipper.

The protein belongs to the HD-ZIP homeobox family. Class II subfamily.

The protein localises to the nucleus. In terms of biological role, probable transcription factor. This Arabidopsis thaliana (Mouse-ear cress) protein is Homeobox-leucine zipper protein HAT14 (HAT14).